A 112-amino-acid polypeptide reads, in one-letter code: Nitrogen regulatory protein P-II (112 aa).

Residue tyrosine 51 is modified to O-UMP-tyrosine.

It belongs to the P(II) protein family. As to quaternary structure, homotrimer.

Its function is as follows. In nitrogen-limiting conditions, when the ratio of Gln to 2-ketoglutarate decreases, P-II is uridylylated to P-II-UMP. P-II-UMP allows the deadenylation of glutamine synthetase (GS), thus activating the enzyme. Conversely, in nitrogen excess P-II is deuridylated and promotes the adenylation of GS. P-II indirectly controls the transcription of the GS gene (glnA). P-II prevents NR-II-catalyzed conversion of NR-I to NR-I-phosphate, the transcriptional activator of glnA. When P-II is uridylylated to P-II-UMP, these events are reversed. The sequence is that of Nitrogen regulatory protein P-II (glnB) from Mycobacterium bovis (strain ATCC BAA-935 / AF2122/97).